Reading from the N-terminus, the 499-residue chain is Ran-binding protein 3 (499 aa).

The segment covering 1–10 has biased composition (basic and acidic residues); the sequence is MADLANEEKP. Disordered regions lie at residues 1–128, 141–196, and 264–303; these read MADL…GTNG, AASP…VFGQ, and LSPP…SLAE. An N-acetylalanine modification is found at A2. An N6-acetyllysine mark is found at K9 and K21. Phosphoserine occurs at positions 32, 33, and 40. Residues 49 to 57 carry the Nuclear localization signal motif; that stretch reads PPVKRERTS. Phosphothreonine is present on T56. 2 stretches are compositionally biased toward polar residues: residues 57–66 and 116–128; these read SSLTQFPPSQ and ALSQ…GTNG. Phosphoserine is present on S58. A phosphoserine mark is found at S151, S265, S285, S287, and S304. A RanBD1 domain is found at 310–450; the sequence is KATARKCLLE…LALRSRVEQE (141 aa). Positions 447 to 499 are disordered; sequence VEQEQEAKMPVPEPGAAPSNEEDDSDDDDVLAPSGATAAGAGDEGDGQTTGST. Positions 466-476 are enriched in acidic residues; it reads NEEDDSDDDDV. S471 bears the Phosphoserine mark. Positions 481 to 499 are enriched in low complexity; sequence GATAAGAGDEGDGQTTGST.

As to quaternary structure, interacts with CHC1 in a Ran-stimulated manner. Interacts with XPO1. Interacts (via its C-terminal R domain) with SMAD2 (dephosphorylated form via its MH1 and MH2 domains); the interaction results in the nuclear export of SMAD2 and termination of the TGF-beta signaling. Interacts (via its C-terminal R domain) with SMAD3 (dephosphorylated form via its MH1 domain); the interaction results in the nuclear export of SMAD3 and termination of the TGF-beta signaling. Phosphorylation at Ser-58 promotes its import into the nucleus.

It is found in the cytoplasm. Its subcellular location is the nucleus. Its function is as follows. Acts as a cofactor for XPO1/CRM1-mediated nuclear export, perhaps as export complex scaffolding protein. Bound to XPO1/CRM1, stabilizes the XPO1/CRM1-cargo interaction. In the absence of Ran-bound GTP prevents binding of XPO1/CRM1 to the nuclear pore complex. Binds to CHC1/RCC1 and increases the guanine nucleotide exchange activity of CHC1/RCC1. Recruits XPO1/CRM1 to CHC1/RCC1 in a Ran-dependent manner. Negative regulator of TGF-beta signaling through interaction with the R-SMAD proteins, SMAD2 and SMAD3, and mediating their nuclear export. The polypeptide is Ran-binding protein 3 (RANBP3) (Macaca fascicularis (Crab-eating macaque)).